A 311-amino-acid polypeptide reads, in one-letter code: Solute carrier family 25 member 48 (311 aa).

Solcar repeat units follow at residues 3–86 (NFQL…TQRF), 100–205 (PHVL…LSDW), and 214–301 (PSPC…SLQA). A run of 6 helical transmembrane segments spans residues 9 to 29 (FVAG…LDTV), 61 to 81 (GMSF…GVFS), 107 to 127 (LLAS…VDLI), 193 to 213 (CLYF…ACAG), 217 to 237 (CAVW…ATPM), and 277 to 295 (ITVN…FLGY).

It belongs to the mitochondrial carrier (TC 2.A.29) family.

It is found in the mitochondrion inner membrane. The protein is Solute carrier family 25 member 48 (SLC25A48) of Bos taurus (Bovine).